The chain runs to 337 residues: Aspartate carbamoyltransferase catalytic subunit (337 aa).

Carbamoyl phosphate is bound by residues arginine 59 and threonine 60. Lysine 87 is an L-aspartate binding site. Carbamoyl phosphate is bound by residues arginine 109, histidine 142, and glutamine 145. L-aspartate contacts are provided by arginine 182 and arginine 253. Carbamoyl phosphate-binding residues include glycine 294 and proline 295.

The protein belongs to the aspartate/ornithine carbamoyltransferase superfamily. ATCase family. As to quaternary structure, heterododecamer (2C3:3R2) of six catalytic PyrB chains organized as two trimers (C3), and six regulatory PyrI chains organized as three dimers (R2).

The enzyme catalyses carbamoyl phosphate + L-aspartate = N-carbamoyl-L-aspartate + phosphate + H(+). The protein operates within pyrimidine metabolism; UMP biosynthesis via de novo pathway; (S)-dihydroorotate from bicarbonate: step 2/3. Functionally, catalyzes the condensation of carbamoyl phosphate and aspartate to form carbamoyl aspartate and inorganic phosphate, the committed step in the de novo pyrimidine nucleotide biosynthesis pathway. The protein is Aspartate carbamoyltransferase catalytic subunit of Prochlorococcus marinus (strain MIT 9211).